The chain runs to 87 residues: Cell division topological specificity factor (87 aa).

This sequence belongs to the MinE family.

Functionally, prevents the cell division inhibition by proteins MinC and MinD at internal division sites while permitting inhibition at polar sites. This ensures cell division at the proper site by restricting the formation of a division septum at the midpoint of the long axis of the cell. This is Cell division topological specificity factor from Herpetosiphon aurantiacus (strain ATCC 23779 / DSM 785 / 114-95).